Consider the following 157-residue polypeptide: 2-C-methyl-D-erythritol 2,4-cyclodiphosphate synthase (157 aa).

2 residues coordinate a divalent metal cation: aspartate 8 and histidine 10. 4-CDP-2-C-methyl-D-erythritol 2-phosphate is bound by residues 8 to 10 (DVH) and 34 to 35 (HS). Histidine 42 contacts a divalent metal cation. 4-CDP-2-C-methyl-D-erythritol 2-phosphate contacts are provided by residues 56 to 58 (DIG), 61 to 65 (FPDTD), 100 to 106 (AQAPKMA), 132 to 135 (TTTE), phenylalanine 139, and arginine 142.

Belongs to the IspF family. As to quaternary structure, homotrimer. A divalent metal cation serves as cofactor.

It catalyses the reaction 4-CDP-2-C-methyl-D-erythritol 2-phosphate = 2-C-methyl-D-erythritol 2,4-cyclic diphosphate + CMP. It functions in the pathway isoprenoid biosynthesis; isopentenyl diphosphate biosynthesis via DXP pathway; isopentenyl diphosphate from 1-deoxy-D-xylulose 5-phosphate: step 4/6. In terms of biological role, involved in the biosynthesis of isopentenyl diphosphate (IPP) and dimethylallyl diphosphate (DMAPP), two major building blocks of isoprenoid compounds. Catalyzes the conversion of 4-diphosphocytidyl-2-C-methyl-D-erythritol 2-phosphate (CDP-ME2P) to 2-C-methyl-D-erythritol 2,4-cyclodiphosphate (ME-CPP) with a corresponding release of cytidine 5-monophosphate (CMP). The polypeptide is 2-C-methyl-D-erythritol 2,4-cyclodiphosphate synthase (Pseudomonas syringae pv. syringae (strain B728a)).